Consider the following 479-residue polypeptide: Cyclin-dependent kinase F-1 (479 aa).

In terms of domain architecture, Protein kinase spans Tyr24–Phe419. ATP contacts are provided by residues Ala30–Val38 and Lys53. The Proton acceptor role is filled by Asp146. Thr291 is subject to Phosphothreonine. The tract at residues Glu429–Ser479 is disordered. Residues Thr468 to Ser479 are compositionally biased toward basic and acidic residues.

It belongs to the protein kinase superfamily. CMGC Ser/Thr protein kinase family. CDC2/CDKX subfamily.

It catalyses the reaction L-seryl-[protein] + ATP = O-phospho-L-seryl-[protein] + ADP + H(+). It carries out the reaction L-threonyl-[protein] + ATP = O-phospho-L-threonyl-[protein] + ADP + H(+). The enzyme catalyses [DNA-directed RNA polymerase] + ATP = phospho-[DNA-directed RNA polymerase] + ADP + H(+). This chain is Cyclin-dependent kinase F-1 (CDKF-1), found in Oryza sativa subsp. japonica (Rice).